Here is a 214-residue protein sequence, read N- to C-terminus: Thymidylate kinase (214 aa).

ATP is bound at residue 10 to 17; it reads GPDGAGKT.

It belongs to the thymidylate kinase family.

It catalyses the reaction dTMP + ATP = dTDP + ADP. Phosphorylation of dTMP to form dTDP in both de novo and salvage pathways of dTTP synthesis. This chain is Thymidylate kinase, found in Limosilactobacillus fermentum (strain NBRC 3956 / LMG 18251) (Lactobacillus fermentum).